Here is a 209-residue protein sequence, read N- to C-terminus: MSYNLMLVENDTVLSKAIQEYLIDQGFNVDIALNGLEAFQLANKYKFDLIISDIIMPIIDGYELLEKLRKIDKLAKIPVIFLTAKGMTKDRIKGYNMGCYGYLSKPFDPEELVSLIKNLIYRDSLNSQNLKKQNSDEIPLFQLLYLTPREKSILNLVIDGLTNKEIAVILDTSIRNVEKYVSRLLQKTNTRNRTLLVKYSIKNNLLNKI.

The Response regulatory domain maps to 4 to 120 (NLMLVENDTV…ELVSLIKNLI (117 aa)). D53 bears the 4-aspartylphosphate mark. One can recognise an HTH luxR-type domain in the interval 139–204 (PLFQLLYLTP…LLVKYSIKNN (66 aa)).

Its subcellular location is the plastid. It localises to the chloroplast. The polypeptide is Probable transcriptional regulator ycf29 (ycf29) (Porphyra purpurea (Red seaweed)).